The sequence spans 285 residues: Phospholipid phosphatase 1 (285 aa).

At 1-6 the chain is on the cytoplasmic side; sequence MFDKAR. The PDZ-binding; involved in localization to the apical cell membrane motif lies at 5–7; sequence ARL. Residues 7 to 27 form a helical membrane-spanning segment; sequence LPYVALDVLCVVLAGLPFAIL. At 28–53 the chain is on the extracellular side; the sequence is TSRHTPFQRGIFCNDESIKYPYKEDT. Residues 54–74 form a helical membrane-spanning segment; the sequence is IPYALLGGIMIPFSIVVMIIG. The Cytoplasmic segment spans residues 75 to 94; sequence ETLSVYCNLLHSNSFIRNNY. Residues 95–115 traverse the membrane as a helical segment; it reads IATIYKSIGTFLFGAAASQSL. Residues 116–165 lie on the Extracellular side of the membrane; it reads TDIAKYSIGRLRPHFLSVCDPDWSKVNCSDGYIEYYVCRGNAEKVKEGRL. The phosphatase sequence motif I stretch occupies residues 120–128; it reads KYSIGRLRP. Asn142 carries N-linked (GlcNAc...) asparagine glycosylation. A helical membrane pass occupies residues 166–186; sequence SFYSGHSSFSMYCMVFVALYL. Positions 168–171 are phosphatase sequence motif II; that stretch reads YSGH. The Proton donors role is filled by His171. Residues 187-199 are Cytoplasmic-facing; that stretch reads QARMKGDWARLLR. Residues 200-220 form a helical membrane-spanning segment; the sequence is PTLQFGLVAASIYVGLSRISD. A phosphatase sequence motif III region spans residues 216–227; the sequence is SRISDYKHHWSD. The Extracellular segment spans residues 221 to 229; it reads YKHHWSDVL. His223 serves as the catalytic Nucleophile. A helical transmembrane segment spans residues 230–250; it reads TGLIQGAIVAILVAVYVSDFF. Residues 251–285 lie on the Cytoplasmic side of the membrane; sequence KARNSPFQERKEEDSHTTLHETPTAGNHYRSNHQP. Positions 260-269 are enriched in basic and acidic residues; it reads RKEEDSHTTL. Residues 260–285 form a disordered region; it reads RKEEDSHTTLHETPTAGNHYRSNHQP.

Belongs to the PA-phosphatase related phosphoesterase family. In terms of assembly, forms functional homodimers and homooligomers that are not required for substrate recognition and catalytic activity. Can also form heterooligomers with PLPP2 and PLPP3. In terms of processing, N-glycosylated. N-linked sugars are of the complex type. N-glycosylation is not required for the phosphatase activity.

It is found in the cell membrane. Its subcellular location is the apical cell membrane. The protein localises to the membrane raft. The protein resides in the membrane. It localises to the caveola. It catalyses the reaction a 1,2-diacyl-sn-glycero-3-phosphate + H2O = a 1,2-diacyl-sn-glycerol + phosphate. It carries out the reaction 1,2-dihexadecanoyl-sn-glycero-3-phosphate + H2O = 1,2-dihexadecanoyl-sn-glycerol + phosphate. The catalysed reaction is 1,2-di-(9Z-octadecenoyl)-sn-glycero-3-phosphate + H2O = 1,2-di-(9Z-octadecenoyl)-sn-glycerol + phosphate. The enzyme catalyses a monoacyl-sn-glycero-3-phosphate + H2O = a monoacylglycerol + phosphate. It catalyses the reaction (9Z)-octadecenoyl-sn-glycero-3-phosphate + H2O = (9Z-octadecenoyl)-glycerol + phosphate. It carries out the reaction a 1-acyl-sn-glycero-3-phosphate + H2O = a 1-acyl-sn-glycerol + phosphate. The catalysed reaction is 1-(9Z-octadecenoyl)-sn-glycero-3-phosphate + H2O = 1-(9Z-octadecenoyl)-sn-glycerol + phosphate. The enzyme catalyses a 1,2-diacyl-sn-glycerol 3-diphosphate + H2O = a 1,2-diacyl-sn-glycero-3-phosphate + phosphate + H(+). It catalyses the reaction sphing-4-enine 1-phosphate + H2O = sphing-4-enine + phosphate. It carries out the reaction an N-acylsphing-4-enine 1-phosphate + H2O = an N-acylsphing-4-enine + phosphate. The catalysed reaction is N-(octanoyl)-sphing-4-enine-1-phosphate + H2O = N-octanoylsphing-4-enine + phosphate. The enzyme catalyses N-(9Z-octadecenoyl)-ethanolamine phosphate + H2O = N-(9Z-octadecenoyl) ethanolamine + phosphate. It catalyses the reaction 1-hexadecanoyl-2-(9Z-octadecenoyl)-sn-glycero-3-phosphate + H2O = 1-hexadecanoyl-2-(9Z-octadecenoyl)-sn-glycerol + phosphate. It participates in lipid metabolism; phospholipid metabolism. Magnesium-independent phospholipid phosphatase. Insensitive to N-ethylmaleimide. Its function is as follows. Magnesium-independent phospholipid phosphatase of the plasma membrane that catalyzes the dephosphorylation of a variety of glycerolipid and sphingolipid phosphate esters including phosphatidate/PA, lysophosphatidate/LPA, diacylglycerol pyrophosphate/DGPP, sphingosine 1-phosphate/S1P and ceramide 1-phosphate/C1P. Also acts on N-oleoyl ethanolamine phosphate/N-(9Z-octadecenoyl)-ethanolamine phosphate, a potential physiological compound. Through its extracellular phosphatase activity allows both the hydrolysis and the cellular uptake of these bioactive lipid mediators from the milieu, regulating signal transduction in different cellular processes. It is for instance essential for the extracellular hydrolysis of S1P and subsequent conversion into intracellular S1P. Involved in the regulation of inflammation, platelets activation, cell proliferation and migration among other processes. May also have an intracellular activity to regulate phospholipid-mediated signaling pathways. The protein is Phospholipid phosphatase 1 of Cavia porcellus (Guinea pig).